Here is a 257-residue protein sequence, read N- to C-terminus: Aquaporin TIP4-2 (257 aa).

2 helical membrane-spanning segments follow: residues 32–52 (LVLTFLFVFTGVSASMAAGAG) and 63–83 (TLAAVAIAHALAAGVLVTAGF). An NPA 1 motif is present at residues 91-93 (NPA). 3 consecutive transmembrane segments (helical) span residues 107-127 (LRALLYVAAQLLASSLACILL), 150-170 (GLVMEVILTFSLLFVTYAMIL), and 178-198 (TIGPLLTGLIVGANSLAGGNF). An NPA 2 motif is present at residues 204–206 (NPA). A helical transmembrane segment spans residues 225–245 (WIGPLLGGSLAGFVYESLFMV).

This sequence belongs to the MIP/aquaporin (TC 1.A.8) family. TIP (TC 1.A.8.10) subfamily.

It localises to the vacuole membrane. Its function is as follows. Aquaporins facilitate the transport of water and small neutral solutes across cell membranes. The chain is Aquaporin TIP4-2 (TIP4-2) from Zea mays (Maize).